The chain runs to 186 residues: Large ribosomal subunit protein uL5 (186 aa).

This sequence belongs to the universal ribosomal protein uL5 family. As to quaternary structure, part of the 50S ribosomal subunit; part of the 5S rRNA/L5/L18/L25 subcomplex. Contacts the 5S rRNA and the P site tRNA. Forms a bridge to the 30S subunit in the 70S ribosome.

This is one of the proteins that bind and probably mediate the attachment of the 5S RNA into the large ribosomal subunit, where it forms part of the central protuberance. In the 70S ribosome it contacts protein S13 of the 30S subunit (bridge B1b), connecting the 2 subunits; this bridge is implicated in subunit movement. Contacts the P site tRNA; the 5S rRNA and some of its associated proteins might help stabilize positioning of ribosome-bound tRNAs. The sequence is that of Large ribosomal subunit protein uL5 from Cereibacter sphaeroides (strain ATCC 17029 / ATH 2.4.9) (Rhodobacter sphaeroides).